The sequence spans 546 residues: Chaperonin GroEL (546 aa).

Residues 30-33 (TLGP), 87-91 (DGTTT), Gly414, 477-479 (NAL), and Asp493 contribute to the ATP site.

It belongs to the chaperonin (HSP60) family. Forms a cylinder of 14 subunits composed of two heptameric rings stacked back-to-back. Interacts with the co-chaperonin GroES.

The protein resides in the cytoplasm. The catalysed reaction is ATP + H2O + a folded polypeptide = ADP + phosphate + an unfolded polypeptide.. In terms of biological role, together with its co-chaperonin GroES, plays an essential role in assisting protein folding. The GroEL-GroES system forms a nano-cage that allows encapsulation of the non-native substrate proteins and provides a physical environment optimized to promote and accelerate protein folding. This chain is Chaperonin GroEL, found in Syntrophomonas wolfei subsp. wolfei (strain DSM 2245B / Goettingen).